The following is a 198-amino-acid chain: Probable molybdenum cofactor guanylyltransferase (198 aa).

GTP contacts are provided by residues 9–11 (LAG), Lys-22, Asp-66, and Asp-95. Asp-95 contacts Mg(2+).

Belongs to the MobA family. It depends on Mg(2+) as a cofactor.

It localises to the cytoplasm. It carries out the reaction Mo-molybdopterin + GTP + H(+) = Mo-molybdopterin guanine dinucleotide + diphosphate. In terms of biological role, transfers a GMP moiety from GTP to Mo-molybdopterin (Mo-MPT) cofactor (Moco or molybdenum cofactor) to form Mo-molybdopterin guanine dinucleotide (Mo-MGD) cofactor. This chain is Probable molybdenum cofactor guanylyltransferase, found in Clostridium perfringens (strain 13 / Type A).